The following is a 289-amino-acid chain: Probable prolyl 4-hydroxylase 10 (289 aa).

Residues 20–40 (LVFAVLIMSTFVILILLAFGI) traverse the membrane as a helical; Signal-anchor for type II membrane protein segment. Over 41 to 289 (LSVPSNNAGS…KWLRVHEYKV (249 aa)) the chain is Lumenal. The Fe2OG dioxygenase domain maps to 161–284 (HGEGLQVLHY…KWSSTKWLRV (124 aa)). Residues His-179 and Asp-181 each contribute to the Fe cation site. Asn-220 carries an N-linked (GlcNAc...) asparagine glycan. Fe cation is bound at residue His-265. Position 275 (Lys-275) interacts with 2-oxoglutarate.

This sequence belongs to the P4HA family. Fe(2+) is required as a cofactor. It depends on L-ascorbate as a cofactor.

It localises to the endoplasmic reticulum membrane. The enzyme catalyses L-prolyl-[collagen] + 2-oxoglutarate + O2 = trans-4-hydroxy-L-prolyl-[collagen] + succinate + CO2. In terms of biological role, catalyzes the post-translational formation of 4-hydroxyproline in -Xaa-Pro-Gly- sequences in proline-rich peptide sequences of plant glycoproteins and other proteins. Hydroxyprolines are important constituent of many plant cell wall glycoproteins such as extensins, hydroxyproline-rich glycoproteins, lectins and arabinogalactan proteins. The sequence is that of Probable prolyl 4-hydroxylase 10 from Arabidopsis thaliana (Mouse-ear cress).